A 600-amino-acid chain; its full sequence is ATP-dependent lipid A-core flippase (600 aa).

4 consecutive transmembrane segments (helical) span residues Ile27–Leu47, Leu83–Leu103, Leu174–Val194, and Pro267–Leu287. The ABC transmembrane type-1 domain occupies Leu31–Lys322. In terms of domain architecture, ABC transporter spans Leu354–Met590. Gly388–Ser395 is an ATP binding site.

It belongs to the ABC transporter superfamily. Lipid exporter (TC 3.A.1.106) family. As to quaternary structure, homodimer.

It is found in the cell inner membrane. It catalyses the reaction ATP + H2O + lipid A-core oligosaccharideSide 1 = ADP + phosphate + lipid A-core oligosaccharideSide 2.. Functionally, involved in lipopolysaccharide (LPS) biosynthesis. Translocates lipid A-core from the inner to the outer leaflet of the inner membrane. Transmembrane domains (TMD) form a pore in the inner membrane and the ATP-binding domain (NBD) is responsible for energy generation. This Pseudomonas fluorescens (strain Pf0-1) protein is ATP-dependent lipid A-core flippase.